The chain runs to 206 residues: Probable peptidyl-tRNA hydrolase (206 aa).

Catalysis depends on His48, which acts as the Proton acceptor. TRNA is bound by residues Tyr83, Asn85, and Asn137.

It belongs to the PTH family.

Its subcellular location is the mitochondrion. The enzyme catalyses an N-acyl-L-alpha-aminoacyl-tRNA + H2O = an N-acyl-L-amino acid + a tRNA + H(+). In terms of biological role, peptidyl-tRNA hydrolase involved in the recycling of tRNA-Lys from diacetyl-lysyl-tRNA-Lys and is important for mitochondrial function. This Schizosaccharomyces pombe (strain 972 / ATCC 24843) (Fission yeast) protein is Probable peptidyl-tRNA hydrolase (pth1).